A 369-amino-acid chain; its full sequence is Extracellular signal-regulated kinase 2 (369 aa).

The 291-residue stretch at 14-304 (YEVLQKIGKG…AEEALAHPFV (291 aa)) folds into the Protein kinase domain. ATP contacts are provided by residues 20-28 (IGKGAYGIV) and Lys-43. Catalysis depends on Asp-137, which acts as the Proton acceptor. A Phosphothreonine modification is found at Thr-176. The short motif at 176–178 (TEY) is the TXY element. Position 178 is a phosphotyrosine (Tyr-178). The segment at 346–369 (KKKEERKKQTNPTKPDTTAPTLST) is disordered. Residues 355 to 369 (TNPTKPDTTAPTLST) show a composition bias toward polar residues.

This sequence belongs to the protein kinase superfamily. CMGC Ser/Thr protein kinase family. MAP kinase subfamily. The cofactor is Mg(2+). Post-translationally, dually phosphorylated on Thr-176 and Tyr-178, which activates the enzyme.

It carries out the reaction L-seryl-[protein] + ATP = O-phospho-L-seryl-[protein] + ADP + H(+). The enzyme catalyses L-threonyl-[protein] + ATP = O-phospho-L-threonyl-[protein] + ADP + H(+). With respect to regulation, activated by tyrosine and threonine phosphorylation. Implicated in the relay of the cAMP chemotactic signal and cell differentiation. Important for receptor-mediated activation of adenylyl cyclase. This Dictyostelium discoideum (Social amoeba) protein is Extracellular signal-regulated kinase 2 (erkB).